The primary structure comprises 547 residues: Probable bifunctional tRNA threonylcarbamoyladenosine biosynthesis protein (547 aa).

Residues 1-329 (MDTSKDLICI…YRSDMVEVNW (329 aa)) are kae1. The Fe cation site is built by His112, His116, and Tyr133. Residues 133–137 (YVSGG), Asp165, Gly178, Glu182, and Asn262 contribute to the L-threonylcarbamoyladenylate site. Fe cation is bound at residue Asp290. Residues 346–547 (IIPEHLIGKG…KEVEKRARYL (202 aa)) enclose the Protein kinase domain. Residues 352–360 (IGKGAEADI) and Lys373 contribute to the ATP site. The active-site Proton acceptor; for kinase activity is the Asp465.

It in the N-terminal section; belongs to the KAE1 / TsaD family. This sequence in the C-terminal section; belongs to the protein kinase superfamily. Tyr protein kinase family. BUD32 subfamily. Component of the KEOPS complex that consists of Kae1, Bud32, Cgi121 and Pcc1; the whole complex dimerizes. Fe(2+) is required as a cofactor.

The protein resides in the cytoplasm. It carries out the reaction L-seryl-[protein] + ATP = O-phospho-L-seryl-[protein] + ADP + H(+). The enzyme catalyses L-threonyl-[protein] + ATP = O-phospho-L-threonyl-[protein] + ADP + H(+). The catalysed reaction is L-threonylcarbamoyladenylate + adenosine(37) in tRNA = N(6)-L-threonylcarbamoyladenosine(37) in tRNA + AMP + H(+). Its function is as follows. Required for the formation of a threonylcarbamoyl group on adenosine at position 37 (t(6)A37) in tRNAs that read codons beginning with adenine. Is a component of the KEOPS complex that is probably involved in the transfer of the threonylcarbamoyl moiety of threonylcarbamoyl-AMP (TC-AMP) to the N6 group of A37. The Kae1 domain likely plays a direct catalytic role in this reaction. The Bud32 domain probably displays kinase activity that regulates Kae1 function. This chain is Probable bifunctional tRNA threonylcarbamoyladenosine biosynthesis protein, found in Methanococcus maripaludis (strain C7 / ATCC BAA-1331).